The sequence spans 201 residues: Heat shock protein beta-1 (201 aa).

Omega-N-methylarginine is present on R12. At S15 the chain carries Phosphoserine; by MAPKAPK2 and MAPKAPK3. Residue S27 is modified to Phosphoserine. Residues 68–201 are interaction with TGFB1I1; it reads AYNRALSRQL…AGKSEQPENK (134 aa). One can recognise a sHSP domain in the interval 72–180; it reads ALSRQLSSGV…QSAEITIPVT (109 aa). Phosphoserine; by MAPKAPK2, MAPKAPK3 and MAPKAPK5 occurs at positions 74 and 78. Residues S79, S82, and S94 each carry the phosphoserine modification. An N6-acetyllysine modification is found at K119. T170 is modified (phosphothreonine). Residues S172 and S195 each carry the phosphoserine modification.

It belongs to the small heat shock protein (HSP20) family. As to quaternary structure, homooligomer. Homodimer; becomes monomeric upon activation. Heterooligomer; with HSPB6. Associates with alpha- and beta-tubulin. Interacts with TGFB1I1. Interacts with CRYAB. Interacts with HSPB8. Interacts with HSPBAP1. Phosphorylated upon exposure to protein kinase C activators and heat shock. Phosphorylation by MAPKAPK2 and MAPKAPK3 in response to stress dissociates HSPB1 from large small heat-shock protein (sHsps) oligomers and impairs its chaperone activity and ability to protect against oxidative stress effectively. Phosphorylation by MAPKAPK5 in response to PKA stimulation induces F-actin rearrangement.

Its subcellular location is the cytoplasm. It localises to the nucleus. It is found in the cytoskeleton. The protein localises to the spindle. Functionally, small heat shock protein which functions as a molecular chaperone probably maintaining denatured proteins in a folding-competent state. Plays a role in stress resistance and actin organization. Through its molecular chaperone activity may regulate numerous biological processes including the phosphorylation and the axonal transport of neurofilament proteins. The protein is Heat shock protein beta-1 (HSPB1) of Bos taurus (Bovine).